Consider the following 315-residue polypeptide: Mitochondrial outer membrane import complex protein METAXIN (315 aa).

Met-1 is subject to N-acetylmethionine. Residues 157 to 181 (ENAEQREKQIYKRASEAYEALSTRL) adopt a coiled-coil conformation. A helical transmembrane segment spans residues 195 to 215 (LDAFLLSHILFIIQALPVTSV). The segment at 240-277 (ASSSSPSPPLHSFPSSFPRKSSKPKSKPKVEKTEEEKK) is disordered. A compositionally biased stretch (basic and acidic residues) spans 267-277 (PKVEKTEEEKK). Residues 284–304 (FFLAAQFLAVVIYVSVMGGGS) form a helical membrane-spanning segment.

The protein belongs to the metaxin family. Part of a high molecular weight complex that is distinct from the TOM complex. Interacts with a variety of mitochondrial precursor proteins. In terms of tissue distribution, expressed in roots, young cotyledons, flowers and leaves.

It is found in the mitochondrion inner membrane. It localises to the mitochondrion outer membrane. Its function is as follows. Involved in transport of proteins into the mitochondrion. The sequence is that of Mitochondrial outer membrane import complex protein METAXIN (MTX1) from Arabidopsis thaliana (Mouse-ear cress).